Reading from the N-terminus, the 434-residue chain is MSILRIHAREIFDSRGNPTVEVDLYTAKGLFRAAVPSGASTGIYEALELRDNDKTRFMGKGVSQAVEHINKTIAPALVSKKVNVVEQEKIDKLMIEMDGTENKSKFGANAILGVSLAVCKAGAVEKGVPLYRHIADLAGNPEVILPVPAFNVINGGSHAGNKLAMQEFMILPVGASSFREAMRIGAEVYHNLKNVIKEKYGKDATNVGDEGGFAPNILENKEALELLKTAIAKAGYTDQVVIGMDVAASEFYRSGKYDLDFKSPDDPSRYITPDQLADLYKSFVQNYPVVSIEDPFDQDDWGAWQKFTASAGIQVVGDDLTVTNPKRIAKAASEKSCNCLLLKVNQIGSVTESLQACKLAQSNGWGVMVSHRSGETEDTFIADLVVGLCTGQIKTGAPCRSERLAKYNQILRIEEELGSKAKFAGRSFRNPLAK.

Serine 2 is modified (N-acetylserine). Serine 40 serves as a coordination point for Mg(2+). Position 44 is a phosphotyrosine (tyrosine 44). The residue at position 60 (lysine 60) is an N6-acetyllysine; alternate. Residue lysine 60 is modified to N6-succinyllysine; alternate. The residue at position 71 (lysine 71) is an N6-acetyllysine. An N6-acetyllysine; alternate modification is found at lysine 89. Position 89 is an N6-succinyllysine; alternate (lysine 89). N6-acetyllysine occurs at positions 92 and 126. Substrate is bound by residues histidine 158 and glutamate 167. Residues lysine 193 and lysine 199 each carry the N6-acetyllysine modification. Residue lysine 202 is modified to N6-acetyllysine; alternate. Residue lysine 202 forms a Glycyl lysine isopeptide (Lys-Gly) (interchain with G-Cter in SUMO2); alternate linkage. The active-site Proton donor is the glutamate 210. Lysine 228 and lysine 233 each carry N6-acetyllysine; alternate. Lysine 228 carries the post-translational modification N6-succinyllysine; alternate. Lysine 228 carries the N6-(2-hydroxyisobutyryl)lysine; alternate modification. An N6-malonyllysine; alternate modification is found at lysine 233. Aspartate 245 is a binding site for Mg(2+). Serine 254 is subject to Phosphoserine. Position 256 is an N6-acetyllysine (lysine 256). The residue at position 263 (serine 263) is a Phosphoserine. Lysine 281 carries the post-translational modification N6-acetyllysine; alternate. Lysine 281 carries the post-translational modification N6-(2-hydroxyisobutyryl)lysine; alternate. Tyrosine 287 carries the post-translational modification Phosphotyrosine. Residue serine 291 is modified to Phosphoserine. Glutamate 293 and aspartate 318 together coordinate Mg(2+). Residues glutamate 293 and aspartate 318 each coordinate substrate. N6-acetyllysine occurs at positions 335 and 343. Residue lysine 343 is the Proton acceptor of the active site. Substrate-binding positions include 370–373 (SHRS) and lysine 394. The required for interaction with PLG stretch occupies residues 405–434 (AKYNQILRIEEELGSKAKFAGRSFRNPLAK). An N6-acetyllysine modification is found at lysine 406. Lysine 420 is modified (N6-acetyllysine; alternate). An N6-succinyllysine; alternate modification is found at lysine 420. The residue at position 420 (lysine 420) is an N6-malonyllysine; alternate.

Belongs to the enolase family. As to quaternary structure, mammalian enolase is composed of 3 isozyme subunits, alpha, beta and gamma, which can form homodimers or heterodimers which are cell-type and development-specific. ENO1 interacts with PLG in the neuronal plasma membrane and promotes its activation. The C-terminal lysine is required for this binding. In vitro, interacts with several glycolytic enzymes including PKM, PGM, CKM and aldolase. Also binds troponin, in vitro. Interacts with ENO4 and PGAM2. Interacts with CMTM6. It depends on Mg(2+) as a cofactor. In terms of processing, ISGylated. Post-translationally, lysine 2-hydroxyisobutyrylation (Khib) by p300/EP300 activates the phosphopyruvate hydratase activity. As to expression, testis. Found in the principal piece of sperm tail (at protein level). The alpha/alpha homodimer is expressed in embryo and in most adult tissues. The alpha/beta heterodimer and the beta/beta homodimer are found in striated muscle, and the alpha/gamma heterodimer and the gamma/gamma homodimer in neurons. In striated muscle, expression of ENO1 appears to be independent of fiber type.

Its subcellular location is the cytoplasm. It localises to the cell membrane. The enzyme catalyses (2R)-2-phosphoglycerate = phosphoenolpyruvate + H2O. The protein operates within carbohydrate degradation; glycolysis; pyruvate from D-glyceraldehyde 3-phosphate: step 4/5. In terms of biological role, glycolytic enzyme the catalyzes the conversion of 2-phosphoglycerate to phosphoenolpyruvate. In addition to glycolysis, involved in various processes such as growth control, hypoxia tolerance and allergic responses. May also function in the intravascular and pericellular fibrinolytic system due to its ability to serve as a receptor and activator of plasminogen on the cell surface of several cell-types such as leukocytes and neurons. Stimulates immunoglobulin production. The protein is Alpha-enolase (Eno1) of Mus musculus (Mouse).